The chain runs to 661 residues: UvrABC system protein B (661 aa).

A Helicase ATP-binding domain is found at 25-182 (AGLSSKKRSQ…NDLINLQYER (158 aa)). 38–45 (GITGSGKT) contributes to the ATP binding site. Residues 91-114 (YYDYYQPEAYIARTDTFIEKDSSI) carry the Beta-hairpin motif. A Helicase C-terminal domain is found at 430-592 (QVEDLISEIQ…IIPKTINRAI (163 aa)). One can recognise a UVR domain in the interval 621–656 (KTHIDKLKKEMLKAASNLEFEQAVKLRDQLKTLEAA).

The protein belongs to the UvrB family. As to quaternary structure, forms a heterotetramer with UvrA during the search for lesions. Interacts with UvrC in an incision complex.

The protein resides in the cytoplasm. In terms of biological role, the UvrABC repair system catalyzes the recognition and processing of DNA lesions. A damage recognition complex composed of 2 UvrA and 2 UvrB subunits scans DNA for abnormalities. Upon binding of the UvrA(2)B(2) complex to a putative damaged site, the DNA wraps around one UvrB monomer. DNA wrap is dependent on ATP binding by UvrB and probably causes local melting of the DNA helix, facilitating insertion of UvrB beta-hairpin between the DNA strands. Then UvrB probes one DNA strand for the presence of a lesion. If a lesion is found the UvrA subunits dissociate and the UvrB-DNA preincision complex is formed. This complex is subsequently bound by UvrC and the second UvrB is released. If no lesion is found, the DNA wraps around the other UvrB subunit that will check the other stand for damage. This Rickettsia peacockii (strain Rustic) protein is UvrABC system protein B.